Consider the following 335-residue polypeptide: Anthranilate phosphoribosyltransferase (335 aa).

Residues Gly-80, 83-84 (GD), Thr-88, 90-93 (NIST), 108-116 (KHGNRAVSS), and Ser-120 each bind 5-phospho-alpha-D-ribose 1-diphosphate. Gly-80 is a binding site for anthranilate. Ser-92 contributes to the Mg(2+) binding site. Asn-111 is a binding site for anthranilate. An anthranilate-binding site is contributed by Arg-166. The Mg(2+) site is built by Asp-225 and Glu-226.

Belongs to the anthranilate phosphoribosyltransferase family. In terms of assembly, homodimer. Mg(2+) serves as cofactor.

It catalyses the reaction N-(5-phospho-beta-D-ribosyl)anthranilate + diphosphate = 5-phospho-alpha-D-ribose 1-diphosphate + anthranilate. It functions in the pathway amino-acid biosynthesis; L-tryptophan biosynthesis; L-tryptophan from chorismate: step 2/5. Its function is as follows. Catalyzes the transfer of the phosphoribosyl group of 5-phosphorylribose-1-pyrophosphate (PRPP) to anthranilate to yield N-(5'-phosphoribosyl)-anthranilate (PRA). The sequence is that of Anthranilate phosphoribosyltransferase from Clostridium kluyveri (strain NBRC 12016).